A 503-amino-acid chain; its full sequence is Cytochrome P450 3A8 (503 aa).

Heme is bound at residue Cys442.

The protein belongs to the cytochrome P450 family. The cofactor is heme.

Its subcellular location is the endoplasmic reticulum membrane. It localises to the microsome membrane. The enzyme catalyses an organic molecule + reduced [NADPH--hemoprotein reductase] + O2 = an alcohol + oxidized [NADPH--hemoprotein reductase] + H2O + H(+). Functionally, catalyzes nifedipine and nilvadipine oxidations. This is Cytochrome P450 3A8 (CYP3A8) from Macaca fascicularis (Crab-eating macaque).